The chain runs to 488 residues: Integrin beta-like protein 1 (488 aa).

Residues 1 to 21 (MHAGAFINFVWALSLVSLLAA) form the signal peptide. Disulfide bonds link C38/C65, C49/C63, C57/C68, C70/C83, C85/C106, C90/C104, C98/C109, C111/C120, C126/C153, C137/C151, C145/C156, C158/C172, C174/C196, C179/C194, C188/C199, C201/C210, C214/C241, C225/C239, C233/C244, C246/C263, C265/C290, C270/C288, C282/C293, C295/C304, C310/C337, C321/C335, C329/C340, C342/C355, C357/C378, C362/C376, C370/C381, C383/C392, C398/C425, C409/C423, C417/C428, C430/C442, C444/C465, C449/C463, C457/C468, and C470/C479. I-EGF domains are found at residues 38–84 (CRLP…PLCE), 85–121 (CHDW…EACQ), 126–173 (CDLT…KYCE), 174–211 (CDDT…DKCE), 214–264 (CDIT…DTCE), 265–305 (CDER…RKCE), 310–356 (CALS…KNCE), 357–393 (CDDR…KLCQ), 398–443 (CNMT…EFCE), and 444–480 (CDDR…NACE). An I repeat occupies 49 to 89 (CRTPDGSICSGRGSCDCGICLCEVKEAGKYYGPLCECHDWV). Residues 49 to 488 (CRTPDGSICS…CEIWLGSEYP (440 aa)) form a cysteine-rich tandem repeats region. One copy of the II repeat lies at 90–136 (CHTYDGQVCAGHGQCDCGVCKCDVGWSGEACQYPTTCDLTRKKSNEM). The stretch at 137-178 (CKNSQAVICSNAGTCQCGRCKCENSDNSGLIYGKYCECDDTE) is one III repeat. Residues 179-224 (CFDDETQEICGGHGKCYCGNCYCEAGWHGDKCEFQCDITPWEIKKR) form an IV repeat. The V repeat unit spans residues 225–269 (CTSPDGKICSNRGTCVCGECTCHDVDPTGDWGDIHGDTCECDERN). A VI repeat occupies 270–320 (CKSVYDRYSDDFCSGHGQCNCGRCDCKDGWTGRKCEHPRACALSIEESKKK). The stretch at 321–361 (CQGSASQPCSGRGKCECGQCTCFPPGDSKVYGKNCECDDRQ) is one VII repeat. A VIII repeat occupies 362 to 408 (CEDLEGKICGEHGTCSCGRCICEAGWFGKLCQHERKCNMTEEESKSQ). N399 carries an N-linked (GlcNAc...) asparagine glycan. Residues 409 to 448 (CESDDGILCSGKGSCHCGKCICSPQEWYVSGEFCECDDRD) form an IX repeat. A X repeat occupies 449-488 (CDKHDGLICTGNGICNCGNCECWEGWNGNACEIWLGSEYP).

The protein resides in the secreted. In Xenopus laevis (African clawed frog), this protein is Integrin beta-like protein 1 (itgbl1).